The primary structure comprises 530 residues: uncharacterized protein (530 aa).

It belongs to the protein kinase superfamily. ADCK protein kinase family.

This is an uncharacterized protein from Clostridium pasteurianum.